Reading from the N-terminus, the 448-residue chain is UPF0210 protein PAE3581 (448 aa).

It belongs to the UPF0210 family.

This Pyrobaculum aerophilum (strain ATCC 51768 / DSM 7523 / JCM 9630 / CIP 104966 / NBRC 100827 / IM2) protein is UPF0210 protein PAE3581.